Consider the following 347-residue polypeptide: Quinolinate synthase (347 aa).

Residues His47 and Ser68 each contribute to the iminosuccinate site. Cys113 is a binding site for [4Fe-4S] cluster. Residues 139 to 141 (YAN) and Ser156 each bind iminosuccinate. Cys200 is a binding site for [4Fe-4S] cluster. Iminosuccinate contacts are provided by residues 226 to 228 (HPE) and Thr243. Residue Cys297 participates in [4Fe-4S] cluster binding.

This sequence belongs to the quinolinate synthase family. Type 1 subfamily. Requires [4Fe-4S] cluster as cofactor.

The protein resides in the cytoplasm. The catalysed reaction is iminosuccinate + dihydroxyacetone phosphate = quinolinate + phosphate + 2 H2O + H(+). The protein operates within cofactor biosynthesis; NAD(+) biosynthesis; quinolinate from iminoaspartate: step 1/1. Its function is as follows. Catalyzes the condensation of iminoaspartate with dihydroxyacetone phosphate to form quinolinate. In Shigella flexneri, this protein is Quinolinate synthase.